The sequence spans 105 residues: Pyrimidine/purine nucleoside phosphorylase (105 aa).

Belongs to the nucleoside phosphorylase PpnP family.

It catalyses the reaction a purine D-ribonucleoside + phosphate = a purine nucleobase + alpha-D-ribose 1-phosphate. The catalysed reaction is adenosine + phosphate = alpha-D-ribose 1-phosphate + adenine. The enzyme catalyses cytidine + phosphate = cytosine + alpha-D-ribose 1-phosphate. It carries out the reaction guanosine + phosphate = alpha-D-ribose 1-phosphate + guanine. It catalyses the reaction inosine + phosphate = alpha-D-ribose 1-phosphate + hypoxanthine. The catalysed reaction is thymidine + phosphate = 2-deoxy-alpha-D-ribose 1-phosphate + thymine. The enzyme catalyses uridine + phosphate = alpha-D-ribose 1-phosphate + uracil. It carries out the reaction xanthosine + phosphate = alpha-D-ribose 1-phosphate + xanthine. Its function is as follows. Catalyzes the phosphorolysis of diverse nucleosides, yielding D-ribose 1-phosphate and the respective free bases. Can use uridine, adenosine, guanosine, cytidine, thymidine, inosine and xanthosine as substrates. Also catalyzes the reverse reactions. This Paracidovorax citrulli (strain AAC00-1) (Acidovorax citrulli) protein is Pyrimidine/purine nucleoside phosphorylase.